The following is a 248-amino-acid chain: Tyrosine recombinase XerD-like (248 aa).

Residues 1 to 72 (MIAFIEPFLA…TVNQFLYYLY (72 aa)) form the Core-binding (CB) domain. Residues 92-248 (SLKPQLTRLD…PITLEKYYKM (157 aa)) enclose the Tyr recombinase domain. Residue R213 is part of the active site. Y245 functions as the O-(3'-phospho-DNA)-tyrosine intermediate in the catalytic mechanism.

It belongs to the 'phage' integrase family. XerD-like subfamily.

It localises to the cytoplasm. Its function is as follows. Putative tyrosine recombinase. Not involved in the cutting and rejoining of the recombining DNA molecules on dif(SL) site. The sequence is that of Tyrosine recombinase XerD-like from Streptococcus equi subsp. zooepidemicus (strain MGCS10565).